The sequence spans 141 residues: Cholinesterase (141 aa).

N-linked (GlcNAc...) asparagine glycosylation occurs at Asn-39. 49–50 provides a ligand contact to substrate; that stretch reads GS. Ser-131 functions as the Acyl-ester intermediate in the catalytic mechanism. Phosphoserine is present on Ser-131.

The protein belongs to the type-B carboxylesterase/lipase family. Homotetramer; disulfide-linked. Dimer of dimers. In terms of tissue distribution, present in most cells except erythrocytes.

The protein resides in the secreted. It carries out the reaction an acylcholine + H2O = a carboxylate + choline + H(+). Functionally, esterase with broad substrate specificity. Contributes to the inactivation of the neurotransmitter acetylcholine. Can degrade neurotoxic organophosphate esters. The sequence is that of Cholinesterase (BCHE) from Ovis aries (Sheep).